Here is a 1408-residue protein sequence, read N- to C-terminus: DNA-directed RNA polymerase subunit beta (1408 aa).

A disordered region spans residues 1383–1408; that stretch reads PERQRSFGGDFLGGGDGEERKTGTEA. Positions 1399 to 1408 are enriched in basic and acidic residues; the sequence is GEERKTGTEA.

This sequence belongs to the RNA polymerase beta chain family. The RNAP catalytic core consists of 2 alpha, 1 beta, 1 beta' and 1 omega subunit. When a sigma factor is associated with the core the holoenzyme is formed, which can initiate transcription.

It carries out the reaction RNA(n) + a ribonucleoside 5'-triphosphate = RNA(n+1) + diphosphate. In terms of biological role, DNA-dependent RNA polymerase catalyzes the transcription of DNA into RNA using the four ribonucleoside triphosphates as substrates. In Myxococcus xanthus (strain DK1622), this protein is DNA-directed RNA polymerase subunit beta.